Reading from the N-terminus, the 71-residue chain is Gas vesicle protein A (71 aa).

Belongs to the gas vesicle GvpA family. As to quaternary structure, the gas vesicle shell is 2 nm thick and consists of a single layer of this protein. It forms helical ribs nearly perpendicular to the long axis of the vesicle.

It is found in the gas vesicle shell. Gas vesicles are hollow, gas filled proteinaceous nanostructures found in some microorganisms. During planktonic growth they allow positioning of the organism at a favorable depth for light or nutrient acquisition. GvpA forms the protein shell. In terms of biological role, cluster expression in E.coli (gvpA1-gvpA2-gvpC-gvpN-gvpJ-gvpK-gvpF-gvpG-gvpV-gvpW) allows cells to float and produces irregularly shaped gas vesicles. This Nostoc sp. (strain PCC 7120 / SAG 25.82 / UTEX 2576) protein is Gas vesicle protein A.